Reading from the N-terminus, the 194-residue chain is Peptidyl-tRNA hydrolase (194 aa).

Tyr-16 is a binding site for tRNA. Residue His-21 is the Proton acceptor of the active site. Residues Phe-67, Asn-69, and Asn-115 each coordinate tRNA.

Belongs to the PTH family. Monomer.

The protein localises to the cytoplasm. The catalysed reaction is an N-acyl-L-alpha-aminoacyl-tRNA + H2O = an N-acyl-L-amino acid + a tRNA + H(+). Its function is as follows. Hydrolyzes ribosome-free peptidyl-tRNAs (with 1 or more amino acids incorporated), which drop off the ribosome during protein synthesis, or as a result of ribosome stalling. Catalyzes the release of premature peptidyl moieties from peptidyl-tRNA molecules trapped in stalled 50S ribosomal subunits, and thus maintains levels of free tRNAs and 50S ribosomes. The protein is Peptidyl-tRNA hydrolase of Salmonella heidelberg (strain SL476).